The following is a 385-amino-acid chain: Serine/threonine-protein kinase H2 (385 aa).

The Protein kinase domain maps to Y63–V320. Residues I69–V77 and K92 each bind ATP. The tract at residues Q342–H367 is disordered. A compositionally biased stretch (low complexity) spans A344–S359.

The protein belongs to the protein kinase superfamily. CAMK Ser/Thr protein kinase family.

The catalysed reaction is L-seryl-[protein] + ATP = O-phospho-L-seryl-[protein] + ADP + H(+). It catalyses the reaction L-threonyl-[protein] + ATP = O-phospho-L-threonyl-[protein] + ADP + H(+). The polypeptide is Serine/threonine-protein kinase H2 (PSKH2) (Homo sapiens (Human)).